Consider the following 131-residue polypeptide: Arsenate reductase (131 aa).

Catalysis depends on nucleophile residues C10, C82, and C89. 2 cysteine pairs are disulfide-bonded: C10/C82 and C82/C89.

It belongs to the low molecular weight phosphotyrosine protein phosphatase family. Thioredoxin-coupled ArsC subfamily.

The protein resides in the cytoplasm. The catalysed reaction is arsenate + [thioredoxin]-dithiol + H(+) = arsenite + [thioredoxin]-disulfide + H2O. Its function is as follows. Catalyzes the reduction of arsenate [As(V)] to arsenite [As(III)]. This Staphylococcus xylosus protein is Arsenate reductase.